A 168-amino-acid chain; its full sequence is tRNA-splicing endonuclease (168 aa).

Catalysis depends on residues Tyr107, His114, and Lys145.

Belongs to the tRNA-intron endonuclease family. Archaeal short subfamily. Homotetramer; although the tetramer contains four active sites, only two participate in the cleavage. Therefore, it should be considered as a dimer of dimers.

The enzyme catalyses pretRNA = a 3'-half-tRNA molecule with a 5'-OH end + a 5'-half-tRNA molecule with a 2',3'-cyclic phosphate end + an intron with a 2',3'-cyclic phosphate and a 5'-hydroxyl terminus.. Functionally, endonuclease that removes tRNA introns. Cleaves pre-tRNA at the 5'- and 3'-splice sites to release the intron. The products are an intron and two tRNA half-molecules bearing 2',3' cyclic phosphate and 5'-OH termini. Recognizes a pseudosymmetric substrate in which 2 bulged loops of 3 bases are separated by a stem of 4 bp. The chain is tRNA-splicing endonuclease from Thermococcus gammatolerans (strain DSM 15229 / JCM 11827 / EJ3).